The following is a 238-amino-acid chain: COMM domain-containing protein 10 homolog Vlet (238 aa).

Residues 43 to 77 (ASASATSSTVGTSVTTTGRVDSSTEENPTSNTEPE) show a composition bias toward low complexity. Residues 43 to 78 (ASASATSSTVGTSVTTTGRVDSSTEENPTSNTEPEY) form a disordered region. Residues 161–225 (VIEDVAWKLN…SIQGELDAML (65 aa)) form the COMM domain.

The protein belongs to the COMM domain-containing protein 10 family. In terms of assembly, component of the commander complex consisting of the CCC subcomplex and the retriever subcomplex. Component of the CCC subcomplex. Interacts with Smn; along with Sbat and Hez may form an accessory subcomplex involved in SMN complex function.

Scaffold protein in the commander complex that is essential for endosomal recycling of transmembrane cargos; the commander complex is composed of the CCC subcomplex and the retriever subcomplex. May modulate activity of cullin-RING E3 ubiquitin ligase (CRL) complexes. May down-regulate activation of NF-kappa-B. May have an accessory function in the survival motor neuron (SMN) complex. Required for neuromuscular function and organismal viability. In Drosophila melanogaster (Fruit fly), this protein is COMM domain-containing protein 10 homolog Vlet.